Reading from the N-terminus, the 151-residue chain is MHRTSNGSHATGGNLPDVASHYPVAYEQTLDGTVGFVIDEMTPERATASVEVTDTLRQRWGLVHGGAYCALAEMLATEATVAVVHEKGMMAVGQSNHTSFFRPVKEGHVRAEAVRIHAGSTTWFWDVSLRDDAGRLCAVSSMSIAVRPRRD.

Residue glutamate 73 is part of the active site. Residue 100 to 102 (FFR) participates in substrate binding.

This sequence belongs to the thioesterase PaaI family. Homotetramer.

The enzyme catalyses 4-hydroxybenzoyl-CoA + H2O = 4-hydroxybenzoate + CoA + H(+). It participates in xenobiotic degradation; 4-chlorobenzoate degradation; 4-hydroxybenzoate from 4-chlorobenzoate: step 3/3. The protein is 4-hydroxybenzoyl-CoA thioesterase of Arthrobacter globiformis.